A 373-amino-acid polypeptide reads, in one-letter code: Chaperone protein DnaJ (373 aa).

The region spanning 5-70 (DFYATLGVAR…EKRAMYDQYG (66 aa)) is the J domain. The segment at 134 to 212 (GVKKRINIPT…CRGVGRNKAV (79 aa)) adopts a CR-type zinc-finger fold. 8 residues coordinate Zn(2+): Cys147, Cys150, Cys164, Cys167, Cys186, Cys189, Cys200, and Cys203. CXXCXGXG motif repeat units lie at residues 147-154 (CDVCNGSG), 164-171 (CPTCKGSG), 186-193 (CPTCRGAG), and 200-207 (CVKCRGVG).

Belongs to the DnaJ family. As to quaternary structure, homodimer. It depends on Zn(2+) as a cofactor.

The protein resides in the cytoplasm. Functionally, participates actively in the response to hyperosmotic and heat shock by preventing the aggregation of stress-denatured proteins and by disaggregating proteins, also in an autonomous, DnaK-independent fashion. Unfolded proteins bind initially to DnaJ; upon interaction with the DnaJ-bound protein, DnaK hydrolyzes its bound ATP, resulting in the formation of a stable complex. GrpE releases ADP from DnaK; ATP binding to DnaK triggers the release of the substrate protein, thus completing the reaction cycle. Several rounds of ATP-dependent interactions between DnaJ, DnaK and GrpE are required for fully efficient folding. Also involved, together with DnaK and GrpE, in the DNA replication of plasmids through activation of initiation proteins. The polypeptide is Chaperone protein DnaJ (Neisseria gonorrhoeae (strain ATCC 700825 / FA 1090)).